A 111-amino-acid polypeptide reads, in one-letter code: MRGAYYVAIAFLVAASSRTAAEFDQAEPQPAINNDILTSGGTVNEMLPKRVLRGSRDLKDKLAVYANDEQRTFDLFPNENNFSKALNPTITKTANVMRADRDDVMAKAAEQ.

A signal peptide spans 1 to 21 (MRGAYYVAIAFLVAASSRTAA). The short motif at 50-71 (RVLRGSRDLKDKLAVYANDEQR) is the RxLR-dEER element. The N-linked (GlcNAc...) asparagine glycan is linked to N81.

Belongs to the RxLR effector family.

The protein resides in the secreted. It is found in the host nucleus. It localises to the host cytoplasm. Its function is as follows. Secreted effector that completely suppresses the host cell death induced by cell death-inducing proteins. This Plasmopara viticola (Downy mildew of grapevine) protein is Secreted RxLR effector protein 159.